Here is a 152-residue protein sequence, read N- to C-terminus: Ribosome maturation factor RimP (152 aa).

This sequence belongs to the RimP family.

The protein resides in the cytoplasm. Required for maturation of 30S ribosomal subunits. The polypeptide is Ribosome maturation factor RimP (Paraburkholderia xenovorans (strain LB400)).